A 144-amino-acid polypeptide reads, in one-letter code: MWLQNLLLLGTVVCSISAPTRPPSPVTRPWQHVDAIKEALSLLNNSNDTAAVMNETVDVVCEMFDPQEPTCVQTRLNLYKQGLRGSLTRLKSPLTLLAKHYEQHCPLTEETSCETQSITFKSFKDSLNKFLFTIPFDCWGPVKK.

Residues 1-17 form the signal peptide; it reads MWLQNLLLLGTVVCSIS. Serine 24 carries an O-linked (GalNAc...) serine glycan. The O-linked (GalNAc...) threonine glycan is linked to threonine 27. N-linked (GlcNAc...) asparagine glycosylation is found at asparagine 44, asparagine 47, and asparagine 54. 2 disulfides stabilise this stretch: cysteine 71-cysteine 113 and cysteine 105-cysteine 138.

The protein belongs to the GM-CSF family. In terms of assembly, monomer. The signaling GM-CSF receptor complex is a dodecamer of two head-to-head hexamers of two alpha, two beta, and two ligand subunits.

The protein localises to the secreted. Its function is as follows. Cytokine that stimulates the growth and differentiation of hematopoietic precursor cells from various lineages, including granulocytes, macrophages, eosinophils and erythrocytes. The polypeptide is Granulocyte-macrophage colony-stimulating factor (CSF2) (Sus scrofa (Pig)).